The following is a 332-amino-acid chain: Ketol-acid reductoisomerase (NAD(+)) (332 aa).

The region spanning 1–181 (MKIYYDQDAD…GATRAGVIQT (181 aa)) is the KARI N-terminal Rossmann domain. Residues 24–27 (YGSQ), Ser-50, and 82–85 (DEKQ) each bind NAD(+). His-107 is a catalytic residue. Gly-133 contributes to the NAD(+) binding site. The KARI C-terminal knotted domain maps to 182–327 (TFKEETETDL…ARLRGMMPWL (146 aa)). Mg(2+) contacts are provided by Asp-190, Glu-194, Glu-226, and Glu-230. Ser-251 is a binding site for substrate.

The protein belongs to the ketol-acid reductoisomerase family. The cofactor is Mg(2+).

The catalysed reaction is (2R)-2,3-dihydroxy-3-methylbutanoate + NAD(+) = (2S)-2-acetolactate + NADH + H(+). It participates in amino-acid biosynthesis; L-isoleucine biosynthesis; L-isoleucine from 2-oxobutanoate: step 2/4. It functions in the pathway amino-acid biosynthesis; L-valine biosynthesis; L-valine from pyruvate: step 2/4. Functionally, involved in the biosynthesis of branched-chain amino acids (BCAA). Catalyzes an alkyl-migration followed by a ketol-acid reduction of (S)-2-acetolactate (S2AL) to yield (R)-2,3-dihydroxy-isovalerate. In the isomerase reaction, S2AL is rearranged via a Mg-dependent methyl migration to produce 3-hydroxy-3-methyl-2-ketobutyrate (HMKB). In the reductase reaction, this 2-ketoacid undergoes a metal-dependent reduction by NADH to yield (R)-2,3-dihydroxy-isovalerate. The chain is Ketol-acid reductoisomerase (NAD(+)) from Thermacetogenium phaeum (strain ATCC BAA-254 / DSM 26808 / PB).